Reading from the N-terminus, the 257-residue chain is Zinc transporter ZupT (257 aa).

8 consecutive transmembrane segments (helical) span residues 5-25 (LILT…GVIG), 32-52 (VLAF…LMEM), 61-81 (GMSP…YFAL), 109-129 (AILL…ATYV), 137-157 (LGFG…LAVA), 171-191 (ILWA…TWLI), 195-215 (MISP…MVAL), and 236-256 (GVLC…TAGF). Fe(2+) is bound by residues Asn-120 and Glu-123. Glu-123 and His-148 together coordinate Zn(2+). Residues Asn-149, Glu-152, and Glu-181 each coordinate Fe(2+). Position 152 (Glu-152) interacts with Zn(2+).

This sequence belongs to the ZIP transporter (TC 2.A.5) family. ZupT subfamily.

The protein localises to the cell inner membrane. The catalysed reaction is Zn(2+)(in) = Zn(2+)(out). In terms of biological role, mediates zinc uptake. May also transport other divalent cations. The polypeptide is Zinc transporter ZupT (Enterobacter sp. (strain 638)).